The following is a 412-amino-acid chain: CHRNA7-FAM7A fusion protein (412 aa).

A run of 5 helical transmembrane segments spans residues 144–164 (GLNLLIPCVLISALALLVFLL), 172–192 (ISLGITVLLSLTVFMLLVAEI), 205–225 (QYFASTMIIVGLSVVVTVIVL), 240–254 (WTRVILLNWCAWFLR), and 380–400 (LCLMAFSVFTIICTIGILMSA).

This sequence belongs to the ligand-gated ion channel (TC 1.A.9) family. In terms of tissue distribution, expressed in hippocampus.

The protein resides in the membrane. The chain is CHRNA7-FAM7A fusion protein (CHRFAM7A) from Homo sapiens (Human).